We begin with the raw amino-acid sequence, 443 residues long: ATP-dependent protease ATPase subunit HslU (443 aa).

ATP contacts are provided by residues Ile-19, 61–66 (GVGKTE), Asp-256, Glu-321, and Arg-393.

The protein belongs to the ClpX chaperone family. HslU subfamily. In terms of assembly, a double ring-shaped homohexamer of HslV is capped on each side by a ring-shaped HslU homohexamer. The assembly of the HslU/HslV complex is dependent on binding of ATP.

The protein localises to the cytoplasm. Functionally, ATPase subunit of a proteasome-like degradation complex; this subunit has chaperone activity. The binding of ATP and its subsequent hydrolysis by HslU are essential for unfolding of protein substrates subsequently hydrolyzed by HslV. HslU recognizes the N-terminal part of its protein substrates and unfolds these before they are guided to HslV for hydrolysis. The polypeptide is ATP-dependent protease ATPase subunit HslU (Ralstonia pickettii (strain 12J)).